A 173-amino-acid polypeptide reads, in one-letter code: Microfibrillar-associated protein 5 (173 aa).

The signal sequence occupies residues 1-21 (MSLLGPKVLLFLAAFIITSDW). The Cell attachment site motif lies at 30–32 (RGD). A glycan (O-linked (GalNAc...) threonine) is linked at T54. N-linked (GlcNAc...) asparagine glycosylation is present at N79.

The protein belongs to the MFAP family. Interacts with TGFB2. Interacts with BMP2. Interacts with FBN1 (via N-terminal domain) and FBN2. Forms intermolecular disulfide bonds either with other MAGP-2 molecules or with other components of the microfibrils. In terms of processing, N- and O-glycosylated. O-glycosylated with core 1 or possibly core 8 glycans. O-glycan heterogeneity at Thr-54: HexHexNAc (major) and HexHexNAc + sulfate (minor).

It is found in the secreted. It localises to the extracellular space. The protein localises to the extracellular matrix. Its function is as follows. May play a role in hematopoiesis. In the cardiovascular system, could regulate growth factors or participate in cell signaling in maintaining large vessel integrity. Component of the elastin-associated microfibrils. This chain is Microfibrillar-associated protein 5 (MFAP5), found in Homo sapiens (Human).